Here is a 182-residue protein sequence, read N- to C-terminus: ATP-dependent protease subunit HslV (182 aa).

T2 is a catalytic residue. Na(+) contacts are provided by G157, C160, and T163.

Belongs to the peptidase T1B family. HslV subfamily. In terms of assembly, a double ring-shaped homohexamer of HslV is capped on each side by a ring-shaped HslU homohexamer. The assembly of the HslU/HslV complex is dependent on binding of ATP.

It localises to the cytoplasm. The enzyme catalyses ATP-dependent cleavage of peptide bonds with broad specificity.. Its activity is regulated as follows. Allosterically activated by HslU binding. Protease subunit of a proteasome-like degradation complex believed to be a general protein degrading machinery. This Vibrio atlanticus (strain LGP32) (Vibrio splendidus (strain Mel32)) protein is ATP-dependent protease subunit HslV.